Here is a 470-residue protein sequence, read N- to C-terminus: Solvent efflux pump outer membrane protein SrpC (470 aa).

Positions 1–16 (MKFKSLPMFALLMLGG) are cleaved as a signal peptide. C17 carries the N-palmitoyl cysteine lipid modification. The S-diacylglycerol cysteine moiety is linked to residue C17. The interval 104 to 123 (LDGQASGNRTRLPDDLSPTG) is disordered.

Belongs to the outer membrane factor (OMF) (TC 1.B.17) family.

It is found in the cell outer membrane. The outer membrane component of an organic solvent efflux pump. Involved in export of a number of low log POW compounds including hexane (log POW 3.5), toluene (log POW 2.5) and dimethylphthalate (log POW 2.3). The solvent resistance phenotype has been postulated to depend on the operon expression level. This chain is Solvent efflux pump outer membrane protein SrpC (srpC), found in Pseudomonas putida (Arthrobacter siderocapsulatus).